We begin with the raw amino-acid sequence, 209 residues long: rRNA N(6)-adenosine-methyltransferase METTL5 (209 aa).

S-adenosyl-L-methionine contacts are provided by residues Gln28, Thr31, Gly59, Cys62, Val64, Asp81, and 108 to 109 (DV).

It belongs to the methyltransferase superfamily. PrmA family. Heterodimer; heterodimerizes with TRMT112. In terms of tissue distribution, expressed from very early development (8 post-conceptual weeks) and expression persists through adulthood in multiple substructures of the brain, including the cerebellar cortex, hippocampus, and striatum.

The protein resides in the nucleus. It is found in the presynapse. Its subcellular location is the postsynapse. It carries out the reaction adenosine(1832) in 18S rRNA + S-adenosyl-L-methionine = N(6)-methyladenosine(1832) in 18S rRNA + S-adenosyl-L-homocysteine + H(+). RRNA N6-adenosine-methyltransferase activity is inhibited by zinc. Catalytic subunit of a heterodimer with TRMT112, which specifically methylates the 6th position of adenine in position 1832 of 18S rRNA. N6-methylation of adenine(1832) in 18S rRNA resides in the decoding center of 18S rRNA and is required for translation and embryonic stem cells (ESCs) pluripotency and differentiation. The polypeptide is rRNA N(6)-adenosine-methyltransferase METTL5 (Homo sapiens (Human)).